The sequence spans 323 residues: Viral cathepsin (323 aa).

The signal sequence occupies residues 1–16 (MNKILFYLFVYGVVNS). Positions 17–112 (AAYDLLKAPN…IVLDQPPGKG (96 aa)) are cleaved as a propeptide — activation peptide. Cystine bridges form between Cys133–Cys174, Cys167–Cys207, and Cys262–Cys310. The active site involves Cys136. N-linked (GlcNAc...) asparagine; by host glycosylation occurs at Asn158. Residues His269 and Asn289 contribute to the active site.

Belongs to the peptidase C1 family. Post-translationally, synthesized as an inactive proenzyme and activated by proteolytic removal of the inhibitory propeptide.

It catalyses the reaction Endopeptidase of broad specificity, hydrolyzing substrates of both cathepsin L and cathepsin B.. Functionally, cysteine protease that plays an essential role in host liquefaction to facilitate horizontal transmission of the virus. May participate in the degradation of foreign protein expressed by the baculovirus system. The sequence is that of Viral cathepsin (VCATH) from Helicoverpa zea (Corn earworm moth).